A 178-amino-acid chain; its full sequence is MAMYGGQIHLIIGPMFAGKSTELIRLVKRYQIARYKCLVVKYEKDARYGNGVRTHDNTCISAVPTASLDDVESISEHVEVIGIDEGQFFPNIVSFCERMANAGKVLIVAALDGTFQRKPFTNICELIPLAENVTKLNAVCMYCYKDASFSKRLGNETEIEIIGGSDKYKSVCRKCYFF.

Residue 13-20 (GPMFAGKS) coordinates ATP. Glutamate 85 functions as the Proton acceptor in the catalytic mechanism. A substrate-binding site is contributed by phenylalanine 115. Positions 140 and 143 each coordinate Zn(2+). A substrate-binding site is contributed by 159–163 (IEIIG). Residues cysteine 172 and cysteine 175 each contribute to the Zn(2+) site.

It belongs to the thymidine kinase family.

The catalysed reaction is thymidine + ATP = dTMP + ADP + H(+). In Myxoma virus (strain Lausanne) (MYXV), this protein is Thymidine kinase (TK).